Reading from the N-terminus, the 248-residue chain is DNA repair protein RecO (248 aa).

This sequence belongs to the RecO family.

In terms of biological role, involved in DNA repair and RecF pathway recombination. This is DNA repair protein RecO from Streptomyces avermitilis (strain ATCC 31267 / DSM 46492 / JCM 5070 / NBRC 14893 / NCIMB 12804 / NRRL 8165 / MA-4680).